The chain runs to 173 residues: MGTFDLWTDYLGLAHLVRALSGKEGPETRLSPQPEPEPMLEPDQKRSLESSPAPERLCSFCKHNGESRAIYQSHVLKDEAGRVLCPILRDYVCPQCGATRERAHTRRFCPLTGQGYTSVYSHTTRNSAGKKLVRPDKAKTQDTGHRRGGGGGAGFRGAGKSEPSPSCSPSMST.

The interval 23-51 (KEGPETRLSPQPEPEPMLEPDQKRSLESS) is disordered. The Nanos-type zinc finger occupies 57–111 (LCSFCKHNGESRAIYQSHVLKDEAGRVLCPILRDYVCPQCGATRERAHTRRFCPL). Cys58, Cys61, His74, Cys85, Cys93, Cys96, His104, and Cys109 together coordinate Zn(2+). 2 short sequence motifs (C2HC) span residues 58–85 (CSFC…RVLC) and 93–109 (CPQC…RRFC). Positions 123–173 (TTRNSAGKKLVRPDKAKTQDTGHRRGGGGGAGFRGAGKSEPSPSCSPSMST) are disordered. Residues 133-145 (VRPDKAKTQDTGH) show a composition bias toward basic and acidic residues. Positions 161–173 (SEPSPSCSPSMST) are enriched in low complexity.

It belongs to the nanos family. Binds mRNA from germ cells. Interacts with PUM2. As to expression, ovary, testis and brain (at protein level). In the ovaries, expressed during multiple stages of oogenesis, including primordial, primary, secondary and antral follicles with the highest expression in the oocytes. In the testis, expressed in germ cells, type A spermatogonia (SA), primary spermatocytes (S1), round spermatids (S3) and elongated spermatids.

Its subcellular location is the nucleus. It localises to the cytoplasm. The protein resides in the stress granule. It is found in the P-body. Its function is as follows. Plays a role in the maintenance of the undifferentiated state of germ cells regulating the spermatogonia cell cycle and inducing a prolonged transit in G1 phase. Affects cell proliferation probably by repressing translation of specific mRNAs. Maintains the germ cell lineage by suppressing both Bax-dependent and -independent apoptotic pathways. Essential in the early stage embryo to protect the migrating primordial germ cells (PGCs) from apoptosis. In Homo sapiens (Human), this protein is Nanos homolog 3 (NANOS3).